Here is a 705-residue protein sequence, read N- to C-terminus: Polyribonucleotide nucleotidyltransferase (705 aa).

D494 and D500 together coordinate Mg(2+). One can recognise a KH domain in the interval 561–620; sequence PRITTVKVKPEKVRAVIGTGGKNIRQIVSETGVTIDVEDDGTVTIASSDMEASARAIAMV. The 69-residue stretch at 630 to 698 folds into the S1 motif domain; sequence GKIYRGTVKK…KQGKIRLSRK (69 aa).

Belongs to the polyribonucleotide nucleotidyltransferase family. It depends on Mg(2+) as a cofactor.

It is found in the cytoplasm. The enzyme catalyses RNA(n+1) + phosphate = RNA(n) + a ribonucleoside 5'-diphosphate. Involved in mRNA degradation. Catalyzes the phosphorolysis of single-stranded polyribonucleotides processively in the 3'- to 5'-direction. This is Polyribonucleotide nucleotidyltransferase from Syntrophus aciditrophicus (strain SB).